Reading from the N-terminus, the 239-residue chain is Ribosomal RNA small subunit methyltransferase G (239 aa).

S-adenosyl-L-methionine is bound by residues glycine 77, phenylalanine 82, 128 to 129 (AE), and arginine 147. The interval 216-239 (EKKKQTPKKYPRKPGTPNKSPIEG) is disordered.

It belongs to the methyltransferase superfamily. RNA methyltransferase RsmG family.

It localises to the cytoplasm. Specifically methylates the N7 position of guanine in position 535 of 16S rRNA. This Bacillus pumilus (strain SAFR-032) protein is Ribosomal RNA small subunit methyltransferase G.